The chain runs to 199 residues: NADH-quinone oxidoreductase subunit C (199 aa).

Belongs to the complex I 30 kDa subunit family. NDH-1 is composed of 14 different subunits. Subunits NuoB, C, D, E, F, and G constitute the peripheral sector of the complex.

It is found in the cell inner membrane. The enzyme catalyses a quinone + NADH + 5 H(+)(in) = a quinol + NAD(+) + 4 H(+)(out). Functionally, NDH-1 shuttles electrons from NADH, via FMN and iron-sulfur (Fe-S) centers, to quinones in the respiratory chain. The immediate electron acceptor for the enzyme in this species is believed to be ubiquinone. Couples the redox reaction to proton translocation (for every two electrons transferred, four hydrogen ions are translocated across the cytoplasmic membrane), and thus conserves the redox energy in a proton gradient. This is NADH-quinone oxidoreductase subunit C from Cupriavidus metallidurans (strain ATCC 43123 / DSM 2839 / NBRC 102507 / CH34) (Ralstonia metallidurans).